The chain runs to 328 residues: 2,3-diketo-L-gulonate-binding periplasmic protein YiaO (328 aa).

Positions 1–24 are cleaved as a signal peptide; the sequence is MKLRSVTYALFIAGLAAFSTSSLA.

In terms of assembly, the complex comprises the extracytoplasmic solute receptor protein YiaO, and the two transmembrane proteins YiaM and YiaN.

It is found in the periplasm. Its function is as follows. Part of the tripartite ATP-independent periplasmic (TRAP) transport system YiaMNO involved in the uptake of 2,3-diketo-L-gulonate. This protein specifically binds 2,3-diketo-L-gulonate. Is not able to bind either L-ascorbate or dehydroascorbate. This Escherichia coli (strain K12) protein is 2,3-diketo-L-gulonate-binding periplasmic protein YiaO (yiaO).